A 248-amino-acid chain; its full sequence is 23S rRNA (guanosine-2'-O-)-methyltransferase RlmB (248 aa).

The S-adenosyl-L-methionine site is built by G198, L218, and L227.

Belongs to the class IV-like SAM-binding methyltransferase superfamily. RNA methyltransferase TrmH family. RlmB subfamily.

Its subcellular location is the cytoplasm. It carries out the reaction guanosine(2251) in 23S rRNA + S-adenosyl-L-methionine = 2'-O-methylguanosine(2251) in 23S rRNA + S-adenosyl-L-homocysteine + H(+). Functionally, specifically methylates the ribose of guanosine 2251 in 23S rRNA. The sequence is that of 23S rRNA (guanosine-2'-O-)-methyltransferase RlmB from Pseudomonas putida (strain ATCC 47054 / DSM 6125 / CFBP 8728 / NCIMB 11950 / KT2440).